A 346-amino-acid polypeptide reads, in one-letter code: Olfactory receptor 13D1 (346 aa).

Over 1–57 the chain is Extracellular; the sequence is MYRFTDFDVSNISIYLNHVLFYTTQQAGDLEHMETRNYSAMTEFFLVGLSQYPELQL. Asn-37 carries an N-linked (GlcNAc...) asparagine glycan. The helical transmembrane segment at 58 to 78 threads the bilayer; the sequence is FLFLLCLIMYMIILLGNSLLI. The Cytoplasmic segment spans residues 79-86; that stretch reads IITILDSR. Residues 87 to 107 form a helical membrane-spanning segment; sequence LHTPMYFFLGNLSFLDICYTS. The Extracellular segment spans residues 108–131; it reads SSIPPMLIIFMSERKSISFIGCAL. Cysteines 129 and 221 form a disulfide. Residues 132–152 traverse the membrane as a helical segment; the sequence is QMVVSLGLGSTECVLLAVMAY. At 153-171 the chain is on the cytoplasmic side; sequence DHYVAICNPLRYSIIMNGV. A helical transmembrane segment spans residues 172–192; the sequence is LYVQMAAWSWIIGCLTSLLQT. The Extracellular portion of the chain corresponds to 193-229; it reads VLTMMLPFCGNNVIDHITCEILALLKLVCSDITINVL. The helical transmembrane segment at 230–249 threads the bilayer; that stretch reads IMTVTNIVSLVILLLLIFIS. Residues 250-269 are Cytoplasmic-facing; it reads YVFILSSILRINCAEGRKKA. The helical transmembrane segment at 270 to 290 threads the bilayer; the sequence is FSTCSAHSIVVILFYGSALFM. Over 291-303 the chain is Extracellular; the sequence is YMKPKSKNTNTSD. A glycan (N-linked (GlcNAc...) asparagine) is linked at Asn-300. Residues 304-324 form a helical membrane-spanning segment; the sequence is EIIGLSYGVVSPMLNPIIYSL. The Cytoplasmic portion of the chain corresponds to 325 to 346; that stretch reads RNKEVKEAVKKVLSRHLHLLKM.

It belongs to the G-protein coupled receptor 1 family.

It localises to the cell membrane. Its function is as follows. Odorant receptor. In Homo sapiens (Human), this protein is Olfactory receptor 13D1 (OR13D1).